The primary structure comprises 1050 residues: Atrial natriuretic peptide receptor 2 (1050 aa).

The N-terminal stretch at 1-19 (MDLGHSLFVVFTCFLMARC) is a signal peptide. At 20–460 (RTEIGKNITV…FCNEDQLPVL (441 aa)) the chain is on the extracellular side. N-linked (GlcNAc...) asparagine glycosylation is found at N26 and N74. The cysteines at positions 84 and 110 are disulfide-linked. N169, N203, N285, N352, N366, and N415 each carry an N-linked (GlcNAc...) asparagine glycan. Residues C236 and C339 are joined by a disulfide bond. A helical membrane pass occupies residues 461–481 (GIVAVGSGLALIIFGISSFLI). The Cytoplasmic segment spans residues 482 to 1050 (YRKLKLEKEL…LGEKTDVYVI (569 aa)). One can recognise a Protein kinase domain in the interval 517–790 (SRLTISQRGS…PDFSYIKIFV (274 aa)). The Guanylate cyclase domain occupies 865–995 (TIYFSDIVGF…DTVNTASRME (131 aa)).

Belongs to the adenylyl cyclase class-4/guanylyl cyclase family. Post-translationally, phosphorylated. Phosphorylation of the protein kinase-like domain is required for full activation by CNP. In terms of processing, glycosylated. In terms of tissue distribution, high levels found in liver, atrium and gill. Moderate levels found in brain and ventricle, and low levels in esophageal sphincter, stomach, posterior intestine and kidney.

Its subcellular location is the cell membrane. It carries out the reaction GTP = 3',5'-cyclic GMP + diphosphate. Functionally, receptor for the C-type natriuretic peptide NPPC/CNP hormone. Has guanylate cyclase activity upon binding of its ligand. May play a role in the regulation of skeletal growth. The polypeptide is Atrial natriuretic peptide receptor 2 (npr2) (Anguilla japonica (Japanese eel)).